Consider the following 67-residue polypeptide: MKLTCVLIVAVLILTACQVIAADEAEATNRAIKRGWFGEESSCWWCTGFNKCCEAAAVCQSVNSACP.

A signal peptide spans 1-22 (MKLTCVLIVAVLILTACQVIAA). Intrachain disulfides connect Cys43/Cys53, Cys46/Cys59, and Cys52/Cys66.

This sequence belongs to the conotoxin O1 superfamily. In terms of tissue distribution, expressed by the venom duct.

The protein resides in the secreted. Functionally, probable neurotoxin. The sequence is that of Conotoxin Cal6.35 from Californiconus californicus (California cone).